The sequence spans 250 residues: Probable transcriptional regulatory protein RER_29220 (250 aa).

This sequence belongs to the TACO1 family.

The protein resides in the cytoplasm. In Rhodococcus erythropolis (strain PR4 / NBRC 100887), this protein is Probable transcriptional regulatory protein RER_29220.